The sequence spans 389 residues: Phosphoglycerate kinase (389 aa).

Residues 19–21 (DYN), Arg34, 57–60 (HLGR), Arg117, and Arg150 each bind substrate. ATP is bound by residues Lys200, Gly288, Glu319, and 347–350 (GGDS).

This sequence belongs to the phosphoglycerate kinase family. Monomer.

The protein localises to the cytoplasm. It catalyses the reaction (2R)-3-phosphoglycerate + ATP = (2R)-3-phospho-glyceroyl phosphate + ADP. It participates in carbohydrate degradation; glycolysis; pyruvate from D-glyceraldehyde 3-phosphate: step 2/5. The protein is Phosphoglycerate kinase of Deinococcus geothermalis (strain DSM 11300 / CIP 105573 / AG-3a).